A 105-amino-acid polypeptide reads, in one-letter code: Insulin (105 aa).

Residues 1–22 (MAFWLQAASLLVLLALSPGVDA) form the signal peptide. 3 disulfide bridges follow: C29-C91, C41-C104, and C90-C95. Residues 53 to 82 (DVDPLIGFLSPKSAKENEEYPFKDQTEMMV) constitute a propeptide, c peptide.

The protein belongs to the insulin family. In terms of assembly, heterodimer of a B chain and an A chain linked by two disulfide bonds.

Its subcellular location is the secreted. Insulin decreases blood glucose concentration. It increases cell permeability to monosaccharides, amino acids and fatty acids. It accelerates glycolysis, the pentose phosphate cycle, and glycogen synthesis in liver. The sequence is that of Insulin (ins) from Oncorhynchus keta (Chum salmon).